A 135-amino-acid polypeptide reads, in one-letter code: Large ribosomal subunit protein uL16c (135 aa).

It belongs to the universal ribosomal protein uL16 family. In terms of assembly, part of the 50S ribosomal subunit.

The protein resides in the plastid. Its subcellular location is the chloroplast. The polypeptide is Large ribosomal subunit protein uL16c (Coffea arabica (Arabian coffee)).